The primary structure comprises 157 residues: SsrA-binding protein (157 aa).

The tract at residues 134–157 (HDKRESEKKRDWGREKGRLLRARG) is disordered. Over residues 135–151 (DKRESEKKRDWGREKGR) the composition is skewed to basic and acidic residues.

This sequence belongs to the SmpB family.

It localises to the cytoplasm. Its function is as follows. Required for rescue of stalled ribosomes mediated by trans-translation. Binds to transfer-messenger RNA (tmRNA), required for stable association of tmRNA with ribosomes. tmRNA and SmpB together mimic tRNA shape, replacing the anticodon stem-loop with SmpB. tmRNA is encoded by the ssrA gene; the 2 termini fold to resemble tRNA(Ala) and it encodes a 'tag peptide', a short internal open reading frame. During trans-translation Ala-aminoacylated tmRNA acts like a tRNA, entering the A-site of stalled ribosomes, displacing the stalled mRNA. The ribosome then switches to translate the ORF on the tmRNA; the nascent peptide is terminated with the 'tag peptide' encoded by the tmRNA and targeted for degradation. The ribosome is freed to recommence translation, which seems to be the essential function of trans-translation. This is SsrA-binding protein from Nitrobacter hamburgensis (strain DSM 10229 / NCIMB 13809 / X14).